A 269-amino-acid chain; its full sequence is Eukaryotic translation initiation factor 3 subunit G-1 (269 aa).

The 79-residue stretch at 188-266 (AAIRISNLSE…LILSVEWSKP (79 aa)) folds into the RRM domain.

It belongs to the eIF-3 subunit G family. As to quaternary structure, component of the eukaryotic translation initiation factor 3 (eIF-3) complex. The eIF-3 complex interacts with pix.

The protein localises to the cytoplasm. In terms of biological role, RNA-binding component of the eukaryotic translation initiation factor 3 (eIF-3) complex, which is involved in protein synthesis of a specialized repertoire of mRNAs and, together with other initiation factors, stimulates binding of mRNA and methionyl-tRNAi to the 40S ribosome. The eIF-3 complex specifically targets and initiates translation of a subset of mRNAs involved in cell proliferation. This subunit can bind 18S rRNA. This is Eukaryotic translation initiation factor 3 subunit G-1 from Drosophila mojavensis (Fruit fly).